The chain runs to 182 residues: UPF0316 protein BCAH820_3389 (182 aa).

The next 3 membrane-spanning stretches (helical) occupy residues 6-26 (LIFV…ILLV), 32-52 (SAAA…GIVF), and 58-78 (WMNI…GGYI).

Belongs to the UPF0316 family.

Its subcellular location is the cell membrane. The sequence is that of UPF0316 protein BCAH820_3389 from Bacillus cereus (strain AH820).